The sequence spans 217 residues: Large ribosomal subunit protein uL3 (217 aa).

A disordered region spans residues 134 to 154 (DATHGNSLSHRAPGSIGQCQT). Gln-153 bears the N5-methylglutamine mark.

Belongs to the universal ribosomal protein uL3 family. As to quaternary structure, part of the 50S ribosomal subunit. Forms a cluster with proteins L14 and L19. In terms of processing, methylated by PrmB.

In terms of biological role, one of the primary rRNA binding proteins, it binds directly near the 3'-end of the 23S rRNA, where it nucleates assembly of the 50S subunit. The sequence is that of Large ribosomal subunit protein uL3 from Coxiella burnetii (strain Dugway 5J108-111).